Consider the following 251-residue polypeptide: Squamosa promoter-binding-like protein 4 (251 aa).

Positions M1–P15 are enriched in pro residues. The segment at M1–G64 is disordered. Low complexity predominate over residues A24–A43. The SBP-type zinc finger occupies E65 to P142. Zn(2+) contacts are provided by C68, C73, C90, H93, C109, C112, H116, and C128. Residues K125–K141 carry the Bipartite nuclear localization signal motif.

Expressed in stems, leaf sheaths, and young panicles.

The protein resides in the nucleus. In terms of biological role, trans-acting factor that binds specifically to the consensus nucleotide sequence 5'-TNCGTACAA-3'. May be involved in panicle development. This is Squamosa promoter-binding-like protein 4 (SPL4) from Oryza sativa subsp. japonica (Rice).